The chain runs to 226 residues: Gap junction beta-2 protein (226 aa).

The stretch at 2–13 is an intramembrane region; the sequence is DWGTLQTILGGV. At 14–20 the chain is on the cytoplasmic side; it reads NKHSTSI. Residues 21-40 traverse the membrane as a helical segment; the sequence is GKIWLTVLFIFRIMILVVAA. The Extracellular portion of the chain corresponds to 41–73; the sequence is KEVWGDEQADFVCNTLQPGCKNVCYDHYFPISH. Positions 42, 45, and 47 each coordinate Ca(2+). Intrachain disulfides connect Cys53–Cys180, Cys60–Cys174, and Cys64–Cys169. The helical transmembrane segment at 74–94 threads the bilayer; the sequence is IRLWALQLIFVSTPALLVAMH. Residues 95 to 135 are Cytoplasmic-facing; the sequence is VAYRRHEKKRKFIKGEIKSEFKDIEEIKTQKVRIEGSLWWT. Residues 136-156 form a helical membrane-spanning segment; the sequence is YTSSIFFRVIFEAAFMYVFYV. Topologically, residues 157–189 are extracellular; that stretch reads MYDGFSMQRLVKCNAWPCPNTVDCFVSRPTEKT. The helical transmembrane segment at 190-210 threads the bilayer; sequence VFTVFMIAVSGICILLNVTEL. At 211–226 the chain is on the cytoplasmic side; the sequence is CYLLIRYCSGKSKKPV.

The protein belongs to the connexin family. Beta-type (group I) subfamily. A hemichannel or connexon is composed of a hexamer of connexins. A functional gap junction is formed by the apposition of two hemichannels. Forms heteromeric channels with GJB4. Interacts with CNST.

The protein localises to the cell membrane. Its subcellular location is the cell junction. It localises to the gap junction. Its function is as follows. Structural component of gap junctions. Gap junctions are dodecameric channels that connect the cytoplasm of adjoining cells. They are formed by the docking of two hexameric hemichannels, one from each cell membrane. Small molecules and ions diffuse from one cell to a neighboring cell via the central pore. In Gorilla gorilla gorilla (Western lowland gorilla), this protein is Gap junction beta-2 protein (GJB2).